Consider the following 488-residue polypeptide: Aspartyl/glutamyl-tRNA(Asn/Gln) amidotransferase subunit B (488 aa).

The protein belongs to the GatB/GatE family. GatB subfamily. As to quaternary structure, heterotrimer of A, B and C subunits.

It carries out the reaction L-glutamyl-tRNA(Gln) + L-glutamine + ATP + H2O = L-glutaminyl-tRNA(Gln) + L-glutamate + ADP + phosphate + H(+). The catalysed reaction is L-aspartyl-tRNA(Asn) + L-glutamine + ATP + H2O = L-asparaginyl-tRNA(Asn) + L-glutamate + ADP + phosphate + 2 H(+). Allows the formation of correctly charged Asn-tRNA(Asn) or Gln-tRNA(Gln) through the transamidation of misacylated Asp-tRNA(Asn) or Glu-tRNA(Gln) in organisms which lack either or both of asparaginyl-tRNA or glutaminyl-tRNA synthetases. The reaction takes place in the presence of glutamine and ATP through an activated phospho-Asp-tRNA(Asn) or phospho-Glu-tRNA(Gln). The polypeptide is Aspartyl/glutamyl-tRNA(Asn/Gln) amidotransferase subunit B (Chlamydia trachomatis serovar L2 (strain ATCC VR-902B / DSM 19102 / 434/Bu)).